A 512-amino-acid polypeptide reads, in one-letter code: ATP synthase subunit alpha (512 aa).

169–176 (GDRQTGKT) lines the ATP pocket.

This sequence belongs to the ATPase alpha/beta chains family. F-type ATPases have 2 components, CF(1) - the catalytic core - and CF(0) - the membrane proton channel. CF(1) has five subunits: alpha(3), beta(3), gamma(1), delta(1), epsilon(1). CF(0) has three main subunits: a(1), b(2) and c(9-12). The alpha and beta chains form an alternating ring which encloses part of the gamma chain. CF(1) is attached to CF(0) by a central stalk formed by the gamma and epsilon chains, while a peripheral stalk is formed by the delta and b chains.

The protein resides in the cell inner membrane. It carries out the reaction ATP + H2O + 4 H(+)(in) = ADP + phosphate + 5 H(+)(out). Its function is as follows. Produces ATP from ADP in the presence of a proton gradient across the membrane. The alpha chain is a regulatory subunit. The polypeptide is ATP synthase subunit alpha (Azoarcus sp. (strain BH72)).